The following is a 160-amino-acid chain: MRIGLFAVGRLKAGPEKDLAVRYLDRFAKTGPAVGLELARVAEMVESRAANAETRKREEAVQLEKALVDGSLLVLLDERGKALDSEAFANLLATFRDSGKRDLMIAIGGADGLDPALHARADAVLCLGKMTWPHQLVRILIAEQLYRAVTILSGHPYHRA.

S-adenosyl-L-methionine contacts are provided by residues Leu-76, Gly-108, and 127 to 132 (LGKMTW).

Belongs to the RNA methyltransferase RlmH family. In terms of assembly, homodimer.

The protein resides in the cytoplasm. It catalyses the reaction pseudouridine(1915) in 23S rRNA + S-adenosyl-L-methionine = N(3)-methylpseudouridine(1915) in 23S rRNA + S-adenosyl-L-homocysteine + H(+). In terms of biological role, specifically methylates the pseudouridine at position 1915 (m3Psi1915) in 23S rRNA. In Sinorhizobium medicae (strain WSM419) (Ensifer medicae), this protein is Ribosomal RNA large subunit methyltransferase H.